The chain runs to 310 residues: Thiamine-monophosphate kinase (310 aa).

Mg(2+) is bound by residues D24, T38, and D39. D46 provides a ligand contact to substrate. D67 and D115 together coordinate Mg(2+). ATP is bound by residues 114 to 115 (GD) and R138. D203 serves as a coordination point for Mg(2+). Residue S205 coordinates ATP. A Mg(2+)-binding site is contributed by D206. The substrate site is built by E251 and W306.

It belongs to the thiamine-monophosphate kinase family.

The enzyme catalyses thiamine phosphate + ATP = thiamine diphosphate + ADP. It participates in cofactor biosynthesis; thiamine diphosphate biosynthesis; thiamine diphosphate from thiamine phosphate: step 1/1. Its function is as follows. Catalyzes the ATP-dependent phosphorylation of thiamine-monophosphate (TMP) to form thiamine-pyrophosphate (TPP), the active form of vitamin B1. In Nitrosopumilus maritimus (strain SCM1), this protein is Thiamine-monophosphate kinase.